A 422-amino-acid chain; its full sequence is Protein TEX1 (422 aa).

WD repeat units lie at residues 61-100 (ITPN…FDKS), 158-197 (GSKT…SSVC), 207-246 (EDND…LEVC), 251-290 (AHTG…CELI), and 293-332 (DLNS…LLHS). The tract at residues 388–422 (KRRKNNGGGNNHNKRTSKNTDRIGKDRPSRFNSKK) is disordered. Positions 405–416 (KNTDRIGKDRPS) are enriched in basic and acidic residues.

It belongs to the THOC3 family. In terms of assembly, component of the transcription/export (TREX) complex and the THO complex.

It is found in the nucleus. Functionally, component of the TREX complex, which operates in coupling transcription elongation to mRNA export. The chain is Protein TEX1 (TEX1) from Saccharomyces cerevisiae (strain ATCC 204508 / S288c) (Baker's yeast).